The following is a 151-amino-acid chain: 3-dehydroquinate dehydratase (151 aa).

Tyrosine 24 functions as the Proton acceptor in the catalytic mechanism. Residues asparagine 76, histidine 82, and aspartate 89 each coordinate substrate. Histidine 102 serves as the catalytic Proton donor. Residues 103–104 (VS) and arginine 113 contribute to the substrate site.

The protein belongs to the type-II 3-dehydroquinase family. Homododecamer.

The catalysed reaction is 3-dehydroquinate = 3-dehydroshikimate + H2O. It participates in metabolic intermediate biosynthesis; chorismate biosynthesis; chorismate from D-erythrose 4-phosphate and phosphoenolpyruvate: step 3/7. Its function is as follows. Catalyzes a trans-dehydration via an enolate intermediate. The sequence is that of 3-dehydroquinate dehydratase from Rhodopseudomonas palustris (strain HaA2).